Here is a 445-residue protein sequence, read N- to C-terminus: Amino-acid acetyltransferase (445 aa).

Residues 299–438 (EQVRQAQIDD…QGLYNYQRNS (140 aa)) enclose the N-acetyltransferase domain.

This sequence belongs to the acetyltransferase family. ArgA subfamily.

The protein resides in the cytoplasm. It catalyses the reaction L-glutamate + acetyl-CoA = N-acetyl-L-glutamate + CoA + H(+). Its pathway is amino-acid biosynthesis; L-arginine biosynthesis; N(2)-acetyl-L-ornithine from L-glutamate: step 1/4. This Vibrio atlanticus (strain LGP32) (Vibrio splendidus (strain Mel32)) protein is Amino-acid acetyltransferase.